Here is a 259-residue protein sequence, read N- to C-terminus: 12alpha-hydroxysteroid dehydrogenase (259 aa).

Residue Y162 is the Proton acceptor of the active site.

This sequence belongs to the short-chain dehydrogenases/reductases (SDR) family. As to quaternary structure, homotetramer.

The catalysed reaction is cholate + NADP(+) = 3alpha,7alpha-dihydroxy-12-oxo-5beta-cholanate + NADPH + H(+). It carries out the reaction deoxycholate + NADP(+) = 12-dehydrodeoxycholate + NADPH + H(+). Its function is as follows. Catalyzes the oxidation of the 12alpha-hydroxy group of bile acids, like cholate and deoxycholate. Is also able to catalyze the reverse reaction in vitro. Is likely involved in an epimerization pathway of bile acids that converts hydroxy groups from alpha to beta positions via stable oxo-intermediates, which occurs in the human gut. This chain is 12alpha-hydroxysteroid dehydrogenase, found in Clostridium sp. (strain ATCC 29733 / VPI C48-50).